The sequence spans 151 residues: MELDIKGIMDRLPHRYPMLLIDRVLEMVPGKSIVAIKNVSINEPFFTGHFPHHPVMPGVLIVEAMAQASALFSFTDENGGLKCDGAKTAYYLVGIDGARFRKPVVPGDQLRLEVEAERLSRTICKYQGRALVDGQLVAEAKLMCAIRSLEE.

H49 is an active-site residue.

Belongs to the thioester dehydratase family. FabZ subfamily.

It localises to the cytoplasm. It carries out the reaction a (3R)-hydroxyacyl-[ACP] = a (2E)-enoyl-[ACP] + H2O. Functionally, involved in unsaturated fatty acids biosynthesis. Catalyzes the dehydration of short chain beta-hydroxyacyl-ACPs and long chain saturated and unsaturated beta-hydroxyacyl-ACPs. This chain is 3-hydroxyacyl-[acyl-carrier-protein] dehydratase FabZ, found in Bordetella bronchiseptica (strain ATCC BAA-588 / NCTC 13252 / RB50) (Alcaligenes bronchisepticus).